A 199-amino-acid polypeptide reads, in one-letter code: Small ribosomal subunit protein uS4 (199 aa).

Positions 94–157 (SRLDNIVYRM…QNVPTILASI (64 aa)) constitute an S4 RNA-binding domain.

This sequence belongs to the universal ribosomal protein uS4 family. In terms of assembly, part of the 30S ribosomal subunit. Contacts protein S5. The interaction surface between S4 and S5 is involved in control of translational fidelity.

Its function is as follows. One of the primary rRNA binding proteins, it binds directly to 16S rRNA where it nucleates assembly of the body of the 30S subunit. With S5 and S12 plays an important role in translational accuracy. This chain is Small ribosomal subunit protein uS4, found in Mycoplasma mobile (strain ATCC 43663 / 163K / NCTC 11711) (Mesomycoplasma mobile).